We begin with the raw amino-acid sequence, 82 residues long: Beta-defensin 113 (82 aa).

Positions 1–16 (MKILCIFLTFFFTVSC) are cleaved as a signal peptide. 3 cysteine pairs are disulfide-bonded: Cys35/Cys61, Cys42/Cys56, and Cys46/Cys62.

Belongs to the beta-defensin family.

It is found in the secreted. Its function is as follows. Has antibacterial activity. This chain is Beta-defensin 113 (DEFB113), found in Pan troglodytes (Chimpanzee).